A 101-amino-acid chain; its full sequence is Small ribosomal subunit protein bS18c (101 aa).

Basic residues predominate over residues 1-19 (MDKSKQLFRKSKGSFRRRL). A disordered region spans residues 1–23 (MDKSKQLFRKSKGSFRRRLPPIG).

This sequence belongs to the bacterial ribosomal protein bS18 family. In terms of assembly, part of the 30S ribosomal subunit.

It is found in the plastid. The protein localises to the chloroplast. In Acorus gramineus (Dwarf sweet flag), this protein is Small ribosomal subunit protein bS18c.